The sequence spans 341 residues: UDP-3-O-(3-hydroxymyristoyl)glucosamine N-acyltransferase (341 aa).

The active-site Proton acceptor is His-239.

This sequence belongs to the transferase hexapeptide repeat family. LpxD subfamily. As to quaternary structure, homotrimer.

It carries out the reaction a UDP-3-O-[(3R)-3-hydroxyacyl]-alpha-D-glucosamine + a (3R)-hydroxyacyl-[ACP] = a UDP-2-N,3-O-bis[(3R)-3-hydroxyacyl]-alpha-D-glucosamine + holo-[ACP] + H(+). It catalyses the reaction UDP-3-O-[(3R)-3-hydroxytetradecanoyl]-alpha-D-glucosamine + (3R)-hydroxytetradecanoyl-[ACP] = UDP-2-N,3-O-bis[(3R)-3-hydroxytetradecanoyl]-alpha-D-glucosamine + holo-[ACP] + H(+). It functions in the pathway glycolipid biosynthesis; lipid IV(A) biosynthesis; lipid IV(A) from (3R)-3-hydroxytetradecanoyl-[acyl-carrier-protein] and UDP-N-acetyl-alpha-D-glucosamine: step 3/6. In terms of biological role, catalyzes the N-acylation of UDP-3-O-(hydroxytetradecanoyl)glucosamine using 3-hydroxytetradecanoyl-ACP as the acyl donor. Is involved in the biosynthesis of lipid A, a phosphorylated glycolipid that anchors the lipopolysaccharide to the outer membrane of the cell. The chain is UDP-3-O-(3-hydroxymyristoyl)glucosamine N-acyltransferase from Escherichia coli O157:H7.